An 86-amino-acid polypeptide reads, in one-letter code: Neurotoxin homolog NL1 (86 aa).

Positions 1-21 (MKTLLLTLVVVTMVCMDLGYT) are cleaved as a signal peptide. Intrachain disulfides connect Cys24–Cys45, Cys38–Cys62, Cys66–Cys78, and Cys79–Cys84.

Belongs to the three-finger toxin family. Short-chain subfamily. Orphan group VIII (haditoxin) sub-subfamily. As to quaternary structure, homodimer; non-covalently linked. As to expression, expressed by the venom gland.

It localises to the secreted. Functionally, antagonist of muscle and neuronal nicotinic acetylcholine receptors (nAChR) with highest affinity for neuronal alpha-7/CHRNA7 nAChRs. The sequence is that of Neurotoxin homolog NL1 from Naja atra (Chinese cobra).